Consider the following 341-residue polypeptide: uncharacterized protein (341 aa).

A helical transmembrane segment spans residues 315-337; sequence VAAWFSGIAGGTFLALKLVSLMM.

Its subcellular location is the cell membrane. This is an uncharacterized protein from Bacillus subtilis (strain 168).